Here is a 297-residue protein sequence, read N- to C-terminus: Vesicular-fusion protein SEC17 (297 aa).

It belongs to the SNAP family.

Its subcellular location is the membrane. Functionally, required for vesicular transport between the endoplasmic reticulum and the Golgi apparatus. The sequence is that of Vesicular-fusion protein SEC17 (SEC17) from Komagataella phaffii (strain GS115 / ATCC 20864) (Yeast).